Reading from the N-terminus, the 257-residue chain is Hydroxyethylthiazole kinase 1 (257 aa).

Met41 lines the substrate pocket. 2 residues coordinate ATP: Lys117 and Thr162. Gly189 contacts substrate.

The protein belongs to the Thz kinase family. Mg(2+) serves as cofactor.

It catalyses the reaction 5-(2-hydroxyethyl)-4-methylthiazole + ATP = 4-methyl-5-(2-phosphooxyethyl)-thiazole + ADP + H(+). It functions in the pathway cofactor biosynthesis; thiamine diphosphate biosynthesis; 4-methyl-5-(2-phosphoethyl)-thiazole from 5-(2-hydroxyethyl)-4-methylthiazole: step 1/1. Functionally, catalyzes the phosphorylation of the hydroxyl group of 4-methyl-5-beta-hydroxyethylthiazole (THZ). The polypeptide is Hydroxyethylthiazole kinase 1 (Oceanobacillus iheyensis (strain DSM 14371 / CIP 107618 / JCM 11309 / KCTC 3954 / HTE831)).